Consider the following 256-residue polypeptide: tRNA pseudouridine synthase A 1 (256 aa).

Residue Asp53 is the Nucleophile of the active site. Tyr111 is a binding site for substrate.

Belongs to the tRNA pseudouridine synthase TruA family. Homodimer.

It catalyses the reaction uridine(38/39/40) in tRNA = pseudouridine(38/39/40) in tRNA. Formation of pseudouridine at positions 38, 39 and 40 in the anticodon stem and loop of transfer RNAs. This is tRNA pseudouridine synthase A 1 from Protochlamydia amoebophila (strain UWE25).